Consider the following 247-residue polypeptide: Probable proteasome subunit alpha type-5 (247 aa).

Thr55 carries the phosphothreonine modification.

This sequence belongs to the peptidase T1A family. As to quaternary structure, the 26S proteasome consists of a 20S proteasome core and two 19S regulatory subunits. The 20S proteasome core is composed of 28 subunits that are arranged in four stacked rings, resulting in a barrel-shaped structure. The two end rings are each formed by seven alpha subunits, and the two central rings are each formed by seven beta subunits. The catalytic chamber with the active sites is on the inside of the barrel.

The protein resides in the cytoplasm. The protein localises to the nucleus. Functionally, the proteasome is a multicatalytic proteinase complex which is characterized by its ability to cleave peptides with Arg, Phe, Tyr, Leu, and Glu adjacent to the leaving group at neutral or slightly basic pH. The proteasome has an ATP-dependent proteolytic activity. In Schizosaccharomyces pombe (strain 972 / ATCC 24843) (Fission yeast), this protein is Probable proteasome subunit alpha type-5 (pup2).